A 1098-amino-acid polypeptide reads, in one-letter code: Gramicidin S synthase 1 (1098 aa).

The 75-residue stretch at 538–612 (APRNEIEETL…QLVHYIKDSK (75 aa)) folds into the Carrier domain. S573 bears the O-(pantetheine 4'-phosphoryl)serine mark.

It belongs to the ATP-dependent AMP-binding enzyme family. In terms of assembly, large multienzyme complex of GrsA and GrsB. The cofactor is pantetheine 4'-phosphate.

It catalyses the reaction L-phenylalanine + ATP + H2O = D-phenylalanine + AMP + diphosphate + H(+). Its pathway is antibiotic biosynthesis; gramicidin S biosynthesis. In the first step of peptide synthesis this enzyme activates phenylalanine and racemizes it to the D-isomer. The protein is Gramicidin S synthase 1 (grsA) of Brevibacillus brevis (Bacillus brevis).